The chain runs to 641 residues: Macrolide export ATP-binding/permease protein MacB (641 aa).

Residues 2–236 (IFLKNICKNI…LILKTMPKEK (235 aa)) form the ABC transporter domain. An ATP-binding site is contributed by 34–41 (GQSGSGKT). 4 consecutive transmembrane segments (helical) span residues 265 to 285 (ILTM…VALG), 519 to 539 (ACVA…IMLV), 571 to 591 (MICT…IFAF), and 604 to 624 (AYSV…FGFF).

Belongs to the ABC transporter superfamily. Macrolide exporter (TC 3.A.1.122) family. As to quaternary structure, homodimer.

The protein localises to the cell inner membrane. Its function is as follows. Non-canonical ABC transporter that contains transmembrane domains (TMD), which form a pore in the inner membrane, and an ATP-binding domain (NBD), which is responsible for energy generation. Confers resistance against macrolides. This Campylobacter jejuni subsp. jejuni serotype O:2 (strain ATCC 700819 / NCTC 11168) protein is Macrolide export ATP-binding/permease protein MacB.